The sequence spans 528 residues: D-3-phosphoglycerate dehydrogenase (528 aa).

NAD(+) contacts are provided by residues 151-152, D171, 230-232, and D256; these read RI and AAR. R232 is a catalytic residue. E261 is a catalytic residue. Residue H279 is the Proton donor of the active site. NAD(+) is bound at residue 279–282; it reads HLGA. Positions 455-528 constitute an ACT domain; it reads NLVIRYVDQP…ANKLEVVNLS (74 aa).

The protein belongs to the D-isomer specific 2-hydroxyacid dehydrogenase family.

It carries out the reaction (2R)-3-phosphoglycerate + NAD(+) = 3-phosphooxypyruvate + NADH + H(+). The enzyme catalyses (R)-2-hydroxyglutarate + NAD(+) = 2-oxoglutarate + NADH + H(+). The protein operates within amino-acid biosynthesis; L-serine biosynthesis; L-serine from 3-phospho-D-glycerate: step 1/3. Catalyzes the reversible oxidation of 3-phospho-D-glycerate to 3-phosphonooxypyruvate, the first step of the phosphorylated L-serine biosynthesis pathway. Also catalyzes the reversible oxidation of 2-hydroxyglutarate to 2-oxoglutarate. This is D-3-phosphoglycerate dehydrogenase (serA) from Mycobacterium leprae (strain TN).